The following is a 361-amino-acid chain: Chorismate synthase (361 aa).

2 residues coordinate NADP(+): arginine 48 and arginine 54. FMN-binding positions include 125 to 127 (RSS), 238 to 239 (NA), glycine 278, 293 to 297 (KPTSS), and arginine 319.

This sequence belongs to the chorismate synthase family. Homotetramer. The cofactor is FMNH2.

The enzyme catalyses 5-O-(1-carboxyvinyl)-3-phosphoshikimate = chorismate + phosphate. It participates in metabolic intermediate biosynthesis; chorismate biosynthesis; chorismate from D-erythrose 4-phosphate and phosphoenolpyruvate: step 7/7. Its function is as follows. Catalyzes the anti-1,4-elimination of the C-3 phosphate and the C-6 proR hydrogen from 5-enolpyruvylshikimate-3-phosphate (EPSP) to yield chorismate, which is the branch point compound that serves as the starting substrate for the three terminal pathways of aromatic amino acid biosynthesis. This reaction introduces a second double bond into the aromatic ring system. The sequence is that of Chorismate synthase from Pectobacterium atrosepticum (strain SCRI 1043 / ATCC BAA-672) (Erwinia carotovora subsp. atroseptica).